Consider the following 336-residue polypeptide: Secreted effector protein SifA (336 aa).

Positions 1–330 are interaction with host PLEKHM2; the sequence is MPITIGNGFL…LHVRSEQQSG (330 aa).

This sequence belongs to the Sif family. In terms of assembly, interacts with host PLEKHM2. Interacts with SseJ; the interaction is indirect.

It is found in the secreted. Its subcellular location is the host cytoplasm. The protein localises to the host cell membrane. Its function is as follows. Effector proteins function to alter host cell physiology and promote bacterial survival in host tissues. This protein is required for endosomal tubulation and formation of Salmonella-induced filaments (Sifs), which are filamentous structures containing lysosomal membrane glycoproteins within epithelial cells. Sif formation is concomitant with intracellular bacterial replication. The chain is Secreted effector protein SifA (sifA) from Salmonella typhimurium (strain LT2 / SGSC1412 / ATCC 700720).